The following is a 500-amino-acid chain: Archaeal-type glutamate synthase [NADPH] (500 aa).

4Fe-4S ferredoxin-type domains are found at residues 7–38 and 40–69; these read SKFI…YDED and DQIK…VRNN. [4Fe-4S] cluster contacts are provided by Cys18, Cys21, Cys24, Cys28, Cys49, Cys52, Cys55, and Cys59.

Belongs to the glutamate synthase family. It depends on FMN as a cofactor.

The enzyme catalyses 2 L-glutamate + NADP(+) = L-glutamine + 2-oxoglutarate + NADPH + H(+). In Dehalococcoides mccartyi (strain ATCC BAA-2266 / KCTC 15142 / 195) (Dehalococcoides ethenogenes (strain 195)), this protein is Archaeal-type glutamate synthase [NADPH].